The primary structure comprises 272 residues: Sulfate transporter CysZ (272 aa).

Transmembrane regions (helical) follow at residues 29 to 49, 66 to 86, 148 to 168, and 219 to 239; these read FVIIPILLNTILLCGLFWLFI, WLSFLSVILLTLSILTILLLF, IIALFLLSFIPLVGQTIVPVL, and FVPVINLLIMPVAVCGATLMW.

It belongs to the CysZ family.

The protein resides in the cell inner membrane. Its function is as follows. High affinity, high specificity proton-dependent sulfate transporter, which mediates sulfate uptake. Provides the sulfur source for the cysteine synthesis pathway. This Haemophilus influenzae (strain 86-028NP) protein is Sulfate transporter CysZ.